Reading from the N-terminus, the 166-residue chain is CDP-archaeol synthase (166 aa).

5 consecutive transmembrane segments (helical) span residues 7–27 (LLLSILIYLPAFIANGSGPFI), 55–75 (LIVALTFGTTVGVIISKFFTA), 78–98 (TLISFLESLFAMIGDMIGAFI), 116–136 (LDFVLGASLILVLMRVNITWY), and 138–158 (FLFICGLAFFLHQGTNYVAYL).

The protein belongs to the CDP-archaeol synthase family. Mg(2+) serves as cofactor.

It localises to the cell membrane. The catalysed reaction is 2,3-bis-O-(geranylgeranyl)-sn-glycerol 1-phosphate + CTP + H(+) = CDP-2,3-bis-O-(geranylgeranyl)-sn-glycerol + diphosphate. Its pathway is membrane lipid metabolism; glycerophospholipid metabolism. Catalyzes the formation of CDP-2,3-bis-(O-geranylgeranyl)-sn-glycerol (CDP-archaeol) from 2,3-bis-(O-geranylgeranyl)-sn-glycerol 1-phosphate (DGGGP) and CTP. This reaction is the third ether-bond-formation step in the biosynthesis of archaeal membrane lipids. This is CDP-archaeol synthase from Saccharolobus islandicus (strain Y.N.15.51 / Yellowstone #2) (Sulfolobus islandicus).